The primary structure comprises 205 residues: MSDQLFERTMAFAGILQAVAQVQYIARHGDSDKDALAASLNSVLVTNPDSTSEVYADKEALKKGYQMIVAQLGDGKQKDVEVTRYLVGILALERKLARSANAMGMLSERINQIHRQLSHFEITDEQVIANFAGIYSDIVSELGPKLQISGNPEFLKRTQTQQKIRALLLSAMRSAVLWRQLGGKRRHLVFARKTIVDTAMKSLTL.

It belongs to the HflD family.

It is found in the cytoplasm. The protein localises to the cell inner membrane. This chain is High frequency lysogenization protein HflD homolog, found in Shewanella piezotolerans (strain WP3 / JCM 13877).